The chain runs to 413 residues: Patatin-like protein 3 (413 aa).

Positions 54-245 (LSVDGGARPE…ALGNPTAAAI (192 aa)) constitute a PNPLA domain. A GGXR motif is present at residues 58-61 (GGAR). The active-site Nucleophile is the serine 100. The segment at 384 to 413 (EHGRRKQHVPPAASGGGGGGLDCHVSKKQP) is disordered.

This sequence belongs to the patatin family.

Its function is as follows. Possesses non-specific lipolytic acyl hydrolase (LAH) activity. Hydrolyzes phospholipids as well as galactolipids. May play a role in disease resistance. The sequence is that of Patatin-like protein 3 (PLP3) from Oryza sativa subsp. indica (Rice).